The sequence spans 376 residues: F-box/kelch-repeat protein At1g67480 (376 aa).

One can recognise an F-box domain in the interval D37–L85. Kelch repeat units lie at residues K139–G189, H190–G237, L239–I289, and W291–S335.

In Arabidopsis thaliana (Mouse-ear cress), this protein is F-box/kelch-repeat protein At1g67480.